The sequence spans 912 residues: Bifunctional uridylyltransferase/uridylyl-removing enzyme (912 aa).

Residues 1-369 (MLPRIANQRA…FFASLRSRRK (369 aa)) form a uridylyltransferase region. Residues 370 to 722 (KVGPFFIEGG…AHWYPARGAT (353 aa)) are uridylyl-removing. An HD domain is found at 486 to 608 (VDEHTIRAIG…VQSQERLRLL (123 aa)). 2 ACT domains span residues 723–802 (LVTV…LVPQ) and 834–912 (VIEV…KDAA).

It belongs to the GlnD family. Mg(2+) serves as cofactor.

The enzyme catalyses [protein-PII]-L-tyrosine + UTP = [protein-PII]-uridylyl-L-tyrosine + diphosphate. The catalysed reaction is [protein-PII]-uridylyl-L-tyrosine + H2O = [protein-PII]-L-tyrosine + UMP + H(+). Uridylyltransferase (UTase) activity is inhibited by glutamine, while glutamine activates uridylyl-removing (UR) activity. Functionally, modifies, by uridylylation and deuridylylation, the PII regulatory proteins (GlnB and homologs), in response to the nitrogen status of the cell that GlnD senses through the glutamine level. Under low glutamine levels, catalyzes the conversion of the PII proteins and UTP to PII-UMP and PPi, while under higher glutamine levels, GlnD hydrolyzes PII-UMP to PII and UMP (deuridylylation). Thus, controls uridylylation state and activity of the PII proteins, and plays an important role in the regulation of nitrogen assimilation and metabolism. The protein is Bifunctional uridylyltransferase/uridylyl-removing enzyme of Novosphingobium aromaticivorans (strain ATCC 700278 / DSM 12444 / CCUG 56034 / CIP 105152 / NBRC 16084 / F199).